The chain runs to 151 residues: Acidic phospholipase A2 1 (151 aa).

The first 21 residues, 1–21, serve as a signal peptide directing secretion; sequence MNPAHLLVLSAVCVSLLGASS. Positions 22–27 are excised as a propeptide; sequence IPPQPL. 7 disulfides stabilise this stretch: cysteine 38–cysteine 104, cysteine 54–cysteine 151, cysteine 56–cysteine 72, cysteine 71–cysteine 132, cysteine 78–cysteine 125, cysteine 88–cysteine 118, and cysteine 111–cysteine 123. Ca(2+) contacts are provided by tyrosine 55, glycine 57, and glycine 59. Histidine 75 is a catalytic residue. Aspartate 76 lines the Ca(2+) pocket. Aspartate 126 is an active-site residue.

Ca(2+) is required as a cofactor. Expressed by the venom gland.

The protein localises to the secreted. It carries out the reaction a 1,2-diacyl-sn-glycero-3-phosphocholine + H2O = a 1-acyl-sn-glycero-3-phosphocholine + a fatty acid + H(+). Its function is as follows. Snake venom phospholipase A2 (PLA2) that may exhibit cardiotoxicity, myotoxicity, antiplatelet activity, and edema-inducing activity. PLA2 catalyzes the calcium-dependent hydrolysis of the 2-acyl groups in 3-sn-phosphoglycerides. The polypeptide is Acidic phospholipase A2 1 (Ophiophagus hannah (King cobra)).